The sequence spans 308 residues: tRNA dimethylallyltransferase (308 aa).

Residue Gly14 to Thr21 coordinates ATP. Thr16–Thr21 is a binding site for substrate. Interaction with substrate tRNA regions lie at residues Asp39–Leu42, Gln163–Arg167, and Arg244–Arg249.

This sequence belongs to the IPP transferase family. In terms of assembly, monomer. Mg(2+) serves as cofactor.

The enzyme catalyses adenosine(37) in tRNA + dimethylallyl diphosphate = N(6)-dimethylallyladenosine(37) in tRNA + diphosphate. Its function is as follows. Catalyzes the transfer of a dimethylallyl group onto the adenine at position 37 in tRNAs that read codons beginning with uridine, leading to the formation of N6-(dimethylallyl)adenosine (i(6)A). The protein is tRNA dimethylallyltransferase of Shewanella loihica (strain ATCC BAA-1088 / PV-4).